Consider the following 331-residue polypeptide: Protein-methionine-sulfoxide reductase catalytic subunit MsrP (331 aa).

A signal peptide (tat-type signal) is located at residues 1–54; that stretch reads MLIKTDRWLRGDDIPASEITPQHLFDQRRRLLAAAALGAAGAALSPWAARRAFA. Mo-molybdopterin-binding positions include Asn86, 89–90, Cys144, Ser179, Asn227, Arg232, and 243–245; these read YE and SAK.

This sequence belongs to the MsrP family. As to quaternary structure, heterodimer of a catalytic subunit (MsrP) and a heme-binding subunit (MsrQ). Mo-molybdopterin serves as cofactor. Predicted to be exported by the Tat system. The position of the signal peptide cleavage has not been experimentally proven.

It localises to the periplasm. It carries out the reaction L-methionyl-[protein] + a quinone + H2O = L-methionyl-(S)-S-oxide-[protein] + a quinol. It catalyses the reaction L-methionyl-[protein] + a quinone + H2O = L-methionyl-(R)-S-oxide-[protein] + a quinol. Its function is as follows. Part of the MsrPQ system that repairs oxidized periplasmic proteins containing methionine sulfoxide residues (Met-O), using respiratory chain electrons. Thus protects these proteins from oxidative-stress damage caused by reactive species of oxygen and chlorine generated by the host defense mechanisms. MsrPQ is essential for the maintenance of envelope integrity under bleach stress, rescuing a wide series of structurally unrelated periplasmic proteins from methionine oxidation. The catalytic subunit MsrP is non-stereospecific, being able to reduce both (R-) and (S-) diastereoisomers of methionine sulfoxide. The polypeptide is Protein-methionine-sulfoxide reductase catalytic subunit MsrP (Ralstonia nicotianae (strain ATCC BAA-1114 / GMI1000) (Ralstonia solanacearum)).